A 117-amino-acid polypeptide reads, in one-letter code: NLIQFGNMIQCANKGSRPTRHYMDYGCYCGWGGSGTPVDELDRCCQTHDDCYGEAEKKGCYPKLTLYSWDCTGNVPICSPKAECKDFVCACDAEAAKCFAKATYNDANWNIDTKTRC.

Disulfide bonds link C11–C71, C27–C117, C29–C45, C44–C98, C51–C91, C60–C84, and C78–C89. Positions 28, 30, and 32 each coordinate Ca(2+). H48 is an active-site residue. Residue D49 participates in Ca(2+) binding. D92 is an active-site residue.

Belongs to the phospholipase A2 family. Group I subfamily. D49 sub-subfamily. Requires Ca(2+) as cofactor. Expressed by the venom gland.

It localises to the secreted. It catalyses the reaction a 1,2-diacyl-sn-glycero-3-phosphocholine + H2O = a 1-acyl-sn-glycero-3-phosphocholine + a fatty acid + H(+). Functionally, PLA2 catalyzes the calcium-dependent hydrolysis of the 2-acyl groups in 3-sn-phosphoglycerides. The polypeptide is Acidic phospholipase A2 PA-1G (Pseudechis australis (Mulga snake)).